A 453-amino-acid chain; its full sequence is Phosphoglucosamine mutase (453 aa).

Residue Ser-105 is the Phosphoserine intermediate of the active site. Residues Ser-105, Asp-244, Asp-246, and Asp-248 each contribute to the Mg(2+) site. Residue Ser-105 is modified to Phosphoserine.

This sequence belongs to the phosphohexose mutase family. Requires Mg(2+) as cofactor. Post-translationally, activated by phosphorylation.

It carries out the reaction alpha-D-glucosamine 1-phosphate = D-glucosamine 6-phosphate. In terms of biological role, catalyzes the conversion of glucosamine-6-phosphate to glucosamine-1-phosphate. This chain is Phosphoglucosamine mutase, found in Blochmanniella pennsylvanica (strain BPEN).